A 251-amino-acid chain; its full sequence is Small ribosomal subunit protein uS3 (251 aa).

Positions 39–109 (IRNYVQARLK…EVKIDVIEVI (71 aa)) constitute a KH type-2 domain. A compositionally biased stretch (basic and acidic residues) spans 222–239 (LKKIKDRRGEQRSRGRDS). The tract at residues 222 to 251 (LKKIKDRRGEQRSRGRDSRNRRRRKPRQTT) is disordered. Positions 240–251 (RNRRRRKPRQTT) are enriched in basic residues.

This sequence belongs to the universal ribosomal protein uS3 family. Part of the 30S ribosomal subunit. Forms a tight complex with proteins S10 and S14.

Functionally, binds the lower part of the 30S subunit head. Binds mRNA in the 70S ribosome, positioning it for translation. The protein is Small ribosomal subunit protein uS3 of Prosthecochloris aestuarii (strain DSM 271 / SK 413).